A 585-amino-acid chain; its full sequence is Glycerol-3-phosphate dehydrogenase 2 (585 aa).

37-65 (DVVVIGGGVVGSGCALDAATRGLKVALVE) serves as a coordination point for FAD.

The protein belongs to the FAD-dependent glycerol-3-phosphate dehydrogenase family. FAD serves as cofactor.

The protein localises to the cytoplasm. The enzyme catalyses a quinone + sn-glycerol 3-phosphate = dihydroxyacetone phosphate + a quinol. The protein is Glycerol-3-phosphate dehydrogenase 2 (glpD2) of Mycobacterium bovis (strain ATCC BAA-935 / AF2122/97).